We begin with the raw amino-acid sequence, 156 residues long: MPRKGHVERREVLPDPVYNSKKVSKLINKVMWDGKKSLAQKICYGAFDIIREKTGRDPLEVFEEALNNVMPVLEVRPRRVGGATYQVPMEVRPERRLSLGIRWLVEYARQRSGKSMMEKLAAEIIDAANNTGGSVKKKEDTHKMAEANKAFAHYRW.

This sequence belongs to the universal ribosomal protein uS7 family. Part of the 30S ribosomal subunit. Contacts proteins S9 and S11.

Its function is as follows. One of the primary rRNA binding proteins, it binds directly to 16S rRNA where it nucleates assembly of the head domain of the 30S subunit. Is located at the subunit interface close to the decoding center, probably blocks exit of the E-site tRNA. This Thermoanaerobacter sp. (strain X514) protein is Small ribosomal subunit protein uS7.